Reading from the N-terminus, the 176-residue chain is Cytochrome b (176 aa).

Transmembrane regions (helical) follow at residues 33–53, 77–98, and 113–133; these read FGSL…FLAM, WLLR…YLHV, and WNVG…GYVL. 2 residues coordinate heme b: histidine 83 and histidine 97.

It belongs to the cytochrome b family. In terms of assembly, the cytochrome bc1 complex contains 11 subunits: 3 respiratory subunits (MT-CYB, CYC1 and UQCRFS1), 2 core proteins (UQCRC1 and UQCRC2) and 6 low-molecular weight proteins (UQCRH/QCR6, UQCRB/QCR7, UQCRQ/QCR8, UQCR10/QCR9, UQCR11/QCR10 and a cleavage product of UQCRFS1). This cytochrome bc1 complex then forms a dimer. Heme b is required as a cofactor.

Its subcellular location is the mitochondrion inner membrane. Its function is as follows. Component of the ubiquinol-cytochrome c reductase complex (complex III or cytochrome b-c1 complex) that is part of the mitochondrial respiratory chain. The b-c1 complex mediates electron transfer from ubiquinol to cytochrome c. Contributes to the generation of a proton gradient across the mitochondrial membrane that is then used for ATP synthesis. This Mormopterus kalinowskii (Kalinowski's mastiff bat) protein is Cytochrome b (MT-CYB).